Reading from the N-terminus, the 488-residue chain is Zinc finger protein 345 (488 aa).

15 consecutive C2H2-type zinc fingers follow at residues 62–84 (LECK…QRIH), 90–112 (YECK…QRIH), 118–140 (FECK…QRIH), 146–168 (YECK…QIIH), 174–196 (YECK…HRIH), 202–224 (YECI…RRIH), 230–252 (YECK…QRIH), 258–280 (YICN…QRIH), 286–308 (YVCK…QRIH), 314–336 (YECK…QRMH), 342–364 (YECK…HRIH), 370–392 (YECK…QLIH), 398–420 (YECK…QRIH), 426–448 (YECK…QRIH), and 454–476 (YECK…KKSH).

Belongs to the krueppel C2H2-type zinc-finger protein family.

The protein localises to the nucleus. In terms of biological role, may be involved in transcriptional regulation. This chain is Zinc finger protein 345 (ZNF345), found in Homo sapiens (Human).